The sequence spans 393 residues: NAD(P)H-quinone oxidoreductase subunit H, chloroplastic (393 aa).

This sequence belongs to the complex I 49 kDa subunit family. As to quaternary structure, NDH is composed of at least 16 different subunits, 5 of which are encoded in the nucleus.

It localises to the plastid. It is found in the chloroplast thylakoid membrane. The catalysed reaction is a plastoquinone + NADH + (n+1) H(+)(in) = a plastoquinol + NAD(+) + n H(+)(out). The enzyme catalyses a plastoquinone + NADPH + (n+1) H(+)(in) = a plastoquinol + NADP(+) + n H(+)(out). Its function is as follows. NDH shuttles electrons from NAD(P)H:plastoquinone, via FMN and iron-sulfur (Fe-S) centers, to quinones in the photosynthetic chain and possibly in a chloroplast respiratory chain. The immediate electron acceptor for the enzyme in this species is believed to be plastoquinone. Couples the redox reaction to proton translocation, and thus conserves the redox energy in a proton gradient. The polypeptide is NAD(P)H-quinone oxidoreductase subunit H, chloroplastic (Saccharum hybrid (Sugarcane)).